The primary structure comprises 769 residues: Serine/threonine-protein kinase PLK4 (769 aa).

Residues 14–267 (YEVQHLLGKG…LEAVLCHPFM (254 aa)) form the Protein kinase domain. ATP is bound by residues 20–28 (LGKGGFATV) and Lys43. The active-site Proton acceptor is the Asp138. Residues 381–498 (EDRISVPPLN…ARFVGLVKSK (118 aa)) enclose the Cryptic POLO box 1 (CPB1) domain. The Cryptic POLO box 2 (CPB2) domain occupies 499–602 (TPKVTYFSTL…GRRPITDVQP (104 aa)). In terms of domain architecture, POLO box spans 660–739 (PIKRINVPEI…IPNIQLKLKT (80 aa)).

Belongs to the protein kinase superfamily. Ser/Thr protein kinase family. CDC5/Polo subfamily. In terms of assembly, homodimer. Interacts with Alms1a. Ubiquitinated by the SCF-slmb ubiquitin ligase complex; leading to its degradation by the proteasome during interphase and regulating centriole number and ensuring the block to centriole reduplication. Expressed in testis (at protein level).

It is found in the cytoplasm. Its subcellular location is the cytoskeleton. The protein resides in the microtubule organizing center. The protein localises to the centrosome. It localises to the centriole. The catalysed reaction is L-seryl-[protein] + ATP = O-phospho-L-seryl-[protein] + ADP + H(+). It catalyses the reaction L-threonyl-[protein] + ATP = O-phospho-L-threonyl-[protein] + ADP + H(+). Serine/threonine-protein kinase that plays a central role in centriole duplication. Able to trigger procentriole formation on the surface of the mother centriole cylinder, using mother centriole as a platform, leading to the recruitment of centriole biogenesis proteins such as Sas-6. When overexpressed, it is able to induce centrosome amplification through the simultaneous generation of multiple procentrioles adjoining each parental centriole during S phase. Centrosome amplification following overexpression can initiate tumorigenesis, highlighting the importance of centrosome regulation in cancers. This Drosophila melanogaster (Fruit fly) protein is Serine/threonine-protein kinase PLK4 (SAK).